Reading from the N-terminus, the 521-residue chain is Glucosidase 2 subunit beta (521 aa).

The signal sequence occupies residues 1-14 (MLLLLLLLLPLCWA). Phosphoserine is present on Ser24. LDL-receptor class A domains lie at 37 to 71 (FTCL…AACP) and 69 to 113 (ACPN…TVCE). 2 disulfide bridges follow: Cys39–Cys58 and Cys56–Cys70. Asp49 is a binding site for substrate. Ca(2+) is bound by residues Gln50, Asp53, Tyr55, Asp57, Asp63, and Glu64. Asp53 lines the substrate pocket. The N-linked (GlcNAc...) asparagine glycan is linked to Asn72. 3 cysteine pairs are disulfide-bonded: Cys77-Cys99, Cys97-Cys112, and Cys100-Cys116. Ser89 is subject to Phosphoserine; by PKC. Residues Arg91, Asp94, Val96, Asp98, Asp104, and Glu105 each coordinate Ca(2+). An N6-succinyllysine modification is found at Lys166. Ser168 is subject to Phosphoserine. EF-hand domains are found at residues 209-244 (REQE…DTDG) and 245-290 (DGAL…TDIP). Ca(2+)-binding residues include Asp222, Asn224, Asp226, Met228, and Glu233. Disordered regions lie at residues 226-267 (DGMV…DTTS) and 280-350 (YRSE…EKMP). Acidic residues-rich tracts occupy residues 241 to 253 (DTDG…EEEA) and 308 to 331 (TEEE…EEEA). Over residues 332-343 (PPPLQPPQPPSP) the composition is skewed to pro residues. Phosphoserine; by PKC occurs at positions 376 and 383. The region spanning 406–507 (SQCYELTTNE…ELMTPAACPE (102 aa)) is the MRH domain. An intrachain disulfide couples Cys408 to Cys421. Ser427 is subject to Phosphoserine; by PKC. Disulfide bonds link Cys464-Cys493 and Cys478-Cys505. Asn469 carries an N-linked (GlcNAc...) asparagine glycan. The short motif at 518–521 (HDEL) is the Prevents secretion from ER element.

In terms of assembly, heterodimer of a catalytic alpha subunit (GANAB) and a beta subunit (PRKCSH). Binds glycosylated PTPRC. In terms of tissue distribution, expressed in kidney (at protein level).

It localises to the endoplasmic reticulum. The protein operates within glycan metabolism; N-glycan metabolism. In terms of biological role, regulatory subunit of glucosidase II that cleaves sequentially the 2 innermost alpha-1,3-linked glucose residues from the Glc(2)Man(9)GlcNAc(2) oligosaccharide precursor of immature glycoproteins. Required for efficient PKD1/Polycystin-1 biogenesis and trafficking to the plasma membrane of the primary cilia. In Mus musculus (Mouse), this protein is Glucosidase 2 subunit beta.